The following is a 1062-amino-acid chain: Integrin alpha-8 (1062 aa).

A signal peptide spans 1 to 35; the sequence is MSAGTHCGPPGNRAPPFARLCCVSAALGMLWSPAC. The Extracellular segment spans residues 36 to 1010; it reads LAFNLDVDKL…ATPNVSFSIP (975 aa). FG-GAP repeat units lie at residues 41–104, 121–182, 187–239, 252–305, 306–371, 372–430, and 434–497; these read DVDK…RSAQ, NGTK…AYAE, RNSN…IANY, KQTD…STDM, TFIQ…LLFQ, DPQV…GLHS, and QVLQ…LHPM. A glycan (N-linked (GlcNAc...) asparagine) is linked at Asn80. Cys95 and Cys105 are oxidised to a cystine. An N-linked (GlcNAc...) asparagine glycan is attached at Asn121. Cys149 and Cys170 are joined by a disulfide. Asn176 carries N-linked (GlcNAc...) asparagine glycosylation. Cys186 and Cys199 are oxidised to a cystine. Asn238 carries an N-linked (GlcNAc...) asparagine glycan. Glu274, Thr276, Asp278, and Glu282 together coordinate Ca(2+). Residues Asn301 and Asn310 are each glycosylated (N-linked (GlcNAc...) asparagine). Ca(2+)-binding residues include Asp328, Asn330, Asp332, Asp336, Asp394, Asn396, Asp398, Tyr400, and Asp402. The short motif at 454–456 is the Cell attachment site element; it reads RGD. Ca(2+)-binding residues include Asp458, Asp460, Asn462, Tyr464, and Asp466. A glycan (N-linked (GlcNAc...) asparagine) is linked at Asn503. 2 disulfide bridges follow: Cys506–Cys517 and Cys523–Cys579. 2 N-linked (GlcNAc...) asparagine glycosylation sites follow: Asn600 and Asn604. 2 disulfide bridges follow: Cys640–Cys646 and Cys712–Cys725. N-linked (GlcNAc...) asparagine glycosylation is found at Asn718, Asn736, Asn752, Asn779, Asn895, and Asn922. 2 disulfides stabilise this stretch: Cys866-Cys923 and Cys928-Cys933. A glycan (N-linked (GlcNAc...) asparagine) is linked at Asn1004. Residues 1011-1031 form a helical membrane-spanning segment; the sequence is LWVIILAILLGLLVLAILTLA. At 1032-1062 the chain is on the cytoplasmic side; that stretch reads LWKCGFFDRARPPQDEMTDREQLTSDKTPEA.

This sequence belongs to the integrin alpha chain family. Heterodimer of an alpha and a beta subunit. The alpha subunit is composed of a heavy and a light chain linked by a disulfide bond. Alpha-8 associates with beta-1. As to expression, in brain, expressed in deep cortex, hippocampal CA1, basolateral amygdala and striatum. In kidney, expressed in glomerular mesengium (at protein level).

Its subcellular location is the membrane. The protein resides in the cell membrane. Integrin alpha-8/beta-1 functions in the genesis of kidney and probably of other organs by regulating the recruitment of mesenchymal cells into epithelial structures. It recognizes the sequence R-G-D in a wide array of ligands including TNC, FN1, SPP1 TGFB1, TGFB3 and VTN. NPNT is probably its functional ligand in kidney genesis. Neuronal receptor for TNC it mediates cell-cell interactions and regulates neurite outgrowth of sensory and motor neurons. The sequence is that of Integrin alpha-8 (Itga8) from Mus musculus (Mouse).